Reading from the N-terminus, the 427-residue chain is Glutamate-1-semialdehyde 2,1-aminomutase (427 aa).

Lys-264 carries the post-translational modification N6-(pyridoxal phosphate)lysine.

It belongs to the class-III pyridoxal-phosphate-dependent aminotransferase family. HemL subfamily. In terms of assembly, homodimer. Pyridoxal 5'-phosphate is required as a cofactor.

The protein localises to the cytoplasm. The enzyme catalyses (S)-4-amino-5-oxopentanoate = 5-aminolevulinate. It participates in porphyrin-containing compound metabolism; protoporphyrin-IX biosynthesis; 5-aminolevulinate from L-glutamyl-tRNA(Glu): step 2/2. The polypeptide is Glutamate-1-semialdehyde 2,1-aminomutase (Clostridium botulinum (strain Eklund 17B / Type B)).